The primary structure comprises 320 residues: Probable trehalose-phosphate phosphatase C (320 aa).

Belongs to the trehalose phosphatase family. A divalent metal cation is required as a cofactor.

It catalyses the reaction alpha,alpha-trehalose 6-phosphate + H2O = alpha,alpha-trehalose + phosphate. Its pathway is glycan biosynthesis; trehalose biosynthesis. In terms of biological role, removes the phosphate from trehalose 6-phosphate to produce free trehalose. Trehalose accumulation in plant may improve abiotic stress tolerance. In Arabidopsis thaliana (Mouse-ear cress), this protein is Probable trehalose-phosphate phosphatase C (TPPC).